The chain runs to 85 residues: CRISPR-associated endoribonuclease Cas2 (85 aa).

Asp8 is a binding site for Mg(2+).

This sequence belongs to the CRISPR-associated endoribonuclease Cas2 protein family. In terms of assembly, homodimer, forms a heterotetramer with a Cas1 homodimer. Requires Mg(2+) as cofactor.

In terms of biological role, CRISPR (clustered regularly interspaced short palindromic repeat), is an adaptive immune system that provides protection against mobile genetic elements (viruses, transposable elements and conjugative plasmids). CRISPR clusters contain sequences complementary to antecedent mobile elements and target invading nucleic acids. CRISPR clusters are transcribed and processed into CRISPR RNA (crRNA). Functions as a ssRNA-specific endoribonuclease. Involved in the integration of spacer DNA into the CRISPR cassette. The chain is CRISPR-associated endoribonuclease Cas2 from Pyrococcus furiosus (strain ATCC 43587 / DSM 3638 / JCM 8422 / Vc1).